Here is a 125-residue protein sequence, read N- to C-terminus: Small ribosomal subunit protein uS12c (125 aa).

This sequence belongs to the universal ribosomal protein uS12 family. In terms of assembly, part of the 30S ribosomal subunit.

It is found in the plastid. Its subcellular location is the chloroplast. With S4 and S5 plays an important role in translational accuracy. Located at the interface of the 30S and 50S subunits. This Tupiella akineta (Green alga) protein is Small ribosomal subunit protein uS12c (rps12).